The chain runs to 230 residues: Somatolactin (230 aa).

An N-terminal signal peptide occupies residues 1-23; it reads MMTAVKQSGVWAVLLWPYLLAVS. Cystine bridges form between cysteine 28–cysteine 38, cysteine 88–cysteine 204, and cysteine 221–cysteine 229. Asparagine 34 and asparagine 144 each carry an N-linked (GlcNAc...) asparagine glycan.

It belongs to the somatotropin/prolactin family. As to expression, pituitary gland.

Its subcellular location is the secreted. The chain is Somatolactin from Solea senegalensis (Senegalese sole).